Consider the following 570-residue polypeptide: Zeta-carotene desaturase, chloroplastic/chromoplastic (570 aa).

Low complexity predominate over residues Met1–Pro16. Positions Met1–Ala33 are disordered.

It belongs to the zeta carotene desaturase family. NAD(+) is required as a cofactor. It depends on NADP(+) as a cofactor. Requires FAD as cofactor.

The protein localises to the plastid. Its subcellular location is the chloroplast. The protein resides in the chromoplast. The enzyme catalyses 9,9'-di-cis-zeta-carotene + 2 a quinone = 7,7',9,9'-tetra-cis-lycopene + 2 a quinol. The protein operates within carotenoid biosynthesis; lycopene biosynthesis. Functionally, catalyzes the conversion of zeta-carotene to lycopene via the intermediary of neurosporene. It carries out two consecutive desaturations (introduction of double bonds) at positions C-7 and C-7'. The protein is Zeta-carotene desaturase, chloroplastic/chromoplastic (ZDS1) of Zea mays (Maize).